We begin with the raw amino-acid sequence, 556 residues long: Melanoma-associated antigen B4 (556 aa).

The span at 1–15 shows a compositional bias: basic residues; it reads MPRGQKSKARAREKR. The disordered stretch occupies residues 1–110; it reads MPRGQKSKAR…RFSENPQNDL (110 aa). The segment covering 39 to 73 has biased composition (polar residues); that stretch reads PSCSNQDSGDAVASTSTAGFPQKSKSQGEAPTTTA. Residues 77 to 87 show a composition bias toward basic residues; the sequence is GACRRSRKSTR. Positions 111-310 constitute an MAGE domain; sequence LTRKTGMLMQ…QAFPTHYEEA (200 aa). Residues 315 to 335 form a disordered region; sequence EERAQAEAVGSPGTSAKDKAE. At S325 the chain carries Phosphoserine. Tandem repeats lie at residues 334–348, 349–363, 364–378, 379–392, 393–407, 408–421, 422–436, 437–451, 452–466, 467–480, 481–495, 496–510, 511–525, 526–539, and 540–554. The interval 334–554 is 15 X 15 AA approximate tandem repeats; sequence AEAKVTLVDS…PLVDSSGKDK (221 aa).

In terms of tissue distribution, expressed in testis (at protein level).

It localises to the cytoplasm. This Mus musculus (Mouse) protein is Melanoma-associated antigen B4.